Reading from the N-terminus, the 215-residue chain is Adenylate kinase (215 aa).

ATP is bound at residue Gly-10 to Thr-15. The segment at Ser-30–Val-59 is NMP. Residues Thr-31, Arg-36, Leu-57–Val-59, Gly-85–Arg-88, and Gln-92 each bind AMP. The interval Gly-126–Asp-163 is LID. Arg-127 serves as a coordination point for ATP. Zn(2+)-binding residues include Cys-130 and Cys-133. Residue Ser-136–Phe-137 participates in ATP binding. Zn(2+) is bound by residues Cys-150 and Cys-153. AMP contacts are provided by Arg-160 and Arg-171. Lys-199 is an ATP binding site.

It belongs to the adenylate kinase family. As to quaternary structure, monomer.

It is found in the cytoplasm. It catalyses the reaction AMP + ATP = 2 ADP. Its pathway is purine metabolism; AMP biosynthesis via salvage pathway; AMP from ADP: step 1/1. Functionally, catalyzes the reversible transfer of the terminal phosphate group between ATP and AMP. Plays an important role in cellular energy homeostasis and in adenine nucleotide metabolism. In Clostridium botulinum (strain Alaska E43 / Type E3), this protein is Adenylate kinase.